The chain runs to 534 residues: Lysophosphatidylcholine acyltransferase 1 (534 aa).

The disordered stretch occupies residues 1 to 22 (MRLRGCGPRAAPASSAGASDAR). The Cytoplasmic portion of the chain corresponds to 1 to 57 (MRLRGCGPRAAPASSAGASDARLLAPPGRNPFVHELRLSALQKAQVALMTLTLFPVR). The span at 7–22 (GPRAAPASSAGASDAR) shows a compositional bias: low complexity. Residues 58 to 78 (LLVAAAMMLLAWPLALVASLG) traverse the membrane as a helical; Signal-anchor for type II membrane protein segment. Residues 79–534 (SAEKEPEQPP…GRKPVRKKLD (456 aa)) are Lumenal-facing. The HXXXXD motif motif lies at 135 to 140 (HSSYFD). EF-hand domains lie at 379–414 (PVSD…VCRP) and 451–486 (VAEL…YPAF). Residues Asp392, Ser394, Ser396, Glu398, and Glu403 each contribute to the Ca(2+) site. Residues 512–534 (GFCADFSPENSDAGRKPVRKKLD) are disordered. Residues 523 to 534 (DAGRKPVRKKLD) are compositionally biased toward basic and acidic residues. The Di-lysine motif motif lies at 531–534 (KKLD).

It belongs to the 1-acyl-sn-glycerol-3-phosphate acyltransferase family. As to expression, erythrocytes.

The protein localises to the endoplasmic reticulum membrane. It localises to the golgi apparatus membrane. The protein resides in the cell membrane. It is found in the lipid droplet. It catalyses the reaction a 1-acyl-sn-glycero-3-phosphocholine + an acyl-CoA = a 1,2-diacyl-sn-glycero-3-phosphocholine + CoA. The enzyme catalyses a 1-acyl-sn-glycero-3-phosphate + an acyl-CoA = a 1,2-diacyl-sn-glycero-3-phosphate + CoA. It carries out the reaction a 1-O-alkyl-sn-glycero-3-phosphocholine + acetyl-CoA = a 1-O-alkyl-2-acetyl-sn-glycero-3-phosphocholine + CoA. The catalysed reaction is a 1-O-(1Z-alkenyl)-sn-glycero-3-phosphocholine + an acyl-CoA = a 1-O-(1Z-alkenyl)-2-acyl-sn-glycero-3-phosphocholine + CoA. It catalyses the reaction 1-acyl-sn-glycero-3-phospho-(1'-sn-glycerol) + an acyl-CoA = a 1,2-diacyl-sn-glycero-3-phospho-(1'-sn-glycerol) + CoA. The enzyme catalyses 1-hexadecanoyl-sn-glycero-3-phosphocholine + (9Z)-octadecenoyl-CoA = 1-hexadecanoyl-2-(9Z-octadecenoyl)-sn-glycero-3-phosphocholine + CoA. It carries out the reaction 1-hexadecanoyl-sn-glycero-3-phosphocholine + hexadecanoyl-CoA = 1,2-dihexadecanoyl-sn-glycero-3-phosphocholine + CoA. The catalysed reaction is 1-O-hexadecyl-sn-glycero-3-phosphocholine + hexadecanoyl-CoA = 1-O-hexadecyl-2-hexadecanoyl-sn-glycero-3-phosphocholine + CoA. It catalyses the reaction a 1-O-(1Z-alkenyl)-sn-glycero-3-phosphocholine + hexadecanoyl-CoA = 1-O-(1Z)-alkenyl-2-hexadecanoyl-sn-glycero-3-phosphocholine + CoA. The enzyme catalyses 1-hexadecanoyl-sn-glycero-3-phospho-(1'-sn-glycerol) + hexadecanoyl-CoA = 1,2-dihexadecanoyl-sn-glycero-3-phospho-(1'-sn-glycerol) + CoA. It carries out the reaction 1-dodecanoyl-sn-glycero-3-phosphocholine + hexadecanoyl-CoA = 1-dodecanoyl-2-hexadecanoyl-sn-glycero-3-phosphocholine + CoA. The catalysed reaction is 1-tetradecanoyl-sn-glycero-3-phosphocholine + hexadecanoyl-CoA = 1-tetradecanoyl-2-hexadecanoyl-sn-glycero-3-phosphocholine + CoA. It catalyses the reaction 1-O-octadecyl-sn-glycero-3-phosphocholine + hexadecanoyl-CoA = 1-O-octadecyl-2-hexadecanoyl-sn-glycero-3-phosphocholine + CoA. The enzyme catalyses 1-octadecanoyl-sn-glycero-3-phosphocholine + hexadecanoyl-CoA = 1-octadecanoyl-2-hexadecanoyl-sn-glycero-3-phosphocholine + CoA. It carries out the reaction 1-(9Z-octadecenoyl)-sn-glycero-3-phosphocholine + hexadecanoyl-CoA = 1-(9Z-octadecenoyl)-2-hexadecanoyl-sn-glycero-3-phosphocholine + CoA. The catalysed reaction is 1-eicosanoyl-sn-glycero-3-phosphocholine + hexadecanoyl-CoA = 1-eicosanoyl-2-hexadecanoyl-sn-glycero-3-phosphocholine + CoA. It catalyses the reaction hexanoyl-CoA + 1-hexadecanoyl-sn-glycero-3-phosphocholine = 1-hexadecanoyl-2-hexanoyl-sn-glycero-3-phosphocholine + CoA. The enzyme catalyses octanoyl-CoA + 1-hexadecanoyl-sn-glycero-3-phosphocholine = 1-hexadecanoyl-2-octanoyl-sn-glycero-3-phosphocholine + CoA. It carries out the reaction decanoyl-CoA + 1-hexadecanoyl-sn-glycero-3-phosphocholine = 1-hexadecanoyl-2-decanoyl-sn-glycero-3-phosphocholine + CoA. The catalysed reaction is dodecanoyl-CoA + 1-hexadecanoyl-sn-glycero-3-phosphocholine = 1-hexadecanoyl-2-dodecanoyl-sn-glycero-3-phosphocholine + CoA. It catalyses the reaction tetradecanoyl-CoA + 1-hexadecanoyl-sn-glycero-3-phosphocholine = 1-hexadecanoyl-2-tetradecanoyl-sn-glycero-3-phosphocholine + CoA. The enzyme catalyses (9Z,12Z)-octadecadienoyl-CoA + 1-hexadecanoyl-sn-glycero-3-phosphocholine = 1-hexadecanoyl-2-(9Z,12Z-octadecadienoyl)-sn-glycero-3-phosphocholine + CoA. It carries out the reaction (4Z,7Z,10Z,13Z,16Z,19Z)-docosahexaenoyl-CoA + 1-hexadecanoyl-sn-glycero-3-phosphocholine = 1-hexadecanoyl-2-(4Z,7Z,10Z,13Z,16Z,19Z-docosahexaenoyl)-sn-glycero-3-phosphocholine + CoA. The catalysed reaction is 1-hexadecanoyl-sn-glycero-3-phosphocholine + acetyl-CoA = 1-hexadecanoyl-2-acetyl-sn-glycero-3-phosphocholine + CoA. It catalyses the reaction eicosanoyl-CoA + 1-hexadecanoyl-sn-glycero-3-phosphocholine = 1-hexadecanoyl-2-eicosanoyl-sn-glycero-3-phosphocholine + CoA. The enzyme catalyses 1-O-hexadecyl-sn-glycero-3-phosphocholine + acetyl-CoA = 1-O-hexadecyl-2-acetyl-sn-glycero-3-phosphocholine + CoA. It carries out the reaction a 1-acyl-sn-glycero-3-phosphocholine + hexadecanoyl-CoA = 1-acyl-2-hexadecanoyl-sn-glycero-3-phosphocholine + CoA. The catalysed reaction is a 1-acyl-sn-glycero-3-phosphate + hexadecanoyl-CoA = 1-acyl-2-hexadecanoyl-sn-glycero-3-phosphate + CoA. It catalyses the reaction 1-acyl-sn-glycero-3-phospho-(1'-sn-glycerol) + hexadecanoyl-CoA = 1-acyl-2-hexadecanoyl-sn-glycero-3-phospho-(1'-sn-glycerol) + CoA. It participates in lipid metabolism; phospholipid metabolism. Functionally, exhibits acyltransferase activity. Exhibits acetyltransferase activity. Activity is calcium-independent. Catalyzes the conversion of lysophosphatidylcholine (1-acyl-sn-glycero-3-phosphocholine or LPC) into phosphatidylcholine (1,2-diacyl-sn-glycero-3-phosphocholine or PC). Catalyzes the conversion 1-acyl-sn-glycerol-3-phosphate (lysophosphatidic acid or LPA) into 1,2-diacyl-sn-glycerol-3-phosphate (phosphatidic acid or PA) by incorporating an acyl moiety at the sn-2 position of the glycerol backbone. Displays a clear preference for saturated fatty acyl-CoAs, and 1-myristoyl or 1-palmitoyl LPC as acyl donors and acceptors, respectively. Involved in platelet-activating factor (PAF) biosynthesis by catalyzing the conversion of the PAF precursor, 1-O-alkyl-sn-glycero-3-phosphocholine (lyso-PAF) into 1-O-alkyl-2-acetyl-sn-glycero-3-phosphocholine (PAF). May synthesize phosphatidylcholine in pulmonary surfactant, thereby playing a pivotal role in respiratory physiology. Involved in the regulation of lipid droplet number and size. In Homo sapiens (Human), this protein is Lysophosphatidylcholine acyltransferase 1 (LPCAT1).